Consider the following 532-residue polypeptide: Phosphoenolpyruvate carboxykinase (ATP) (532 aa).

Positions 60, 194, and 200 each coordinate substrate. Residues K200, H219, and 237 to 245 (GLSGTGKTT) each bind ATP. 2 residues coordinate Mn(2+): K200 and H219. D258 contacts Mn(2+). ATP-binding residues include E286, R324, and T449. R324 lines the substrate pocket.

It belongs to the phosphoenolpyruvate carboxykinase (ATP) family. Mn(2+) serves as cofactor.

It is found in the cytoplasm. The enzyme catalyses oxaloacetate + ATP = phosphoenolpyruvate + ADP + CO2. It participates in carbohydrate biosynthesis; gluconeogenesis. Involved in the gluconeogenesis. Catalyzes the conversion of oxaloacetate (OAA) to phosphoenolpyruvate (PEP) through direct phosphoryl transfer between the nucleoside triphosphate and OAA. The protein is Phosphoenolpyruvate carboxykinase (ATP) of Ruegeria sp. (strain TM1040) (Silicibacter sp.).